The sequence spans 339 residues: Diacylglycerol acyltransferase/mycolyltransferase Ag85A (339 aa).

An N-terminal signal peptide occupies residues 1–43 (MKLVDRFRGAVTGMPRRLMVGAVGAALLSGLVGFVGGSATASA). 85-86 (MR) lines the substrate pocket. Residues 101–111 (FEWYNQSGISV) form a fibronectin-binding region. Cysteine 130 and cysteine 135 are disulfide-bonded. Substrate contacts are provided by serine 169 and aspartate 197. Serine 169 serves as the catalytic Nucleophile. Glutamate 272 is an active-site residue. Residues 274–277 (FVRT), lysine 281, and 304–306 (HDW) each bind substrate. Histidine 304 is an active-site residue.

Belongs to the mycobacterial A85 antigen family. Homodimer.

The protein localises to the secreted. The protein resides in the cell wall. Its subcellular location is the cytoplasm. It carries out the reaction an acyl-CoA + a 1,2-diacyl-sn-glycerol = a triacyl-sn-glycerol + CoA. The catalysed reaction is 2 alpha,alpha'-trehalose 6-mycolate = alpha,alpha'-trehalose 6,6'-bismycolate + alpha,alpha-trehalose. The antigen 85 proteins (FbpA, FbpB, FbpC) are responsible for the high affinity of mycobacteria for fibronectin, a large adhesive glycoprotein, which facilitates the attachment of M.tuberculosis to murine alveolar macrophages (AMs). They also help to maintain the integrity of the cell wall by catalyzing the transfer of mycolic acids to cell wall arabinogalactan, and through the synthesis of alpha,alpha-trehalose dimycolate (TDM, cord factor). They catalyze the transfer of a mycoloyl residue from one molecule of alpha,alpha-trehalose monomycolate (TMM) to another TMM, leading to the formation of TDM. FbpA mediates triacylglycerol (TAG) formation with long-chain acyl-CoA as the acyl donor and 1,2-dipalmitoyl-sn-glycerol (1,2-dipalmitin) as the acyl acceptor. It has a preference for C26:0-CoA over C18:1-CoA. The chain is Diacylglycerol acyltransferase/mycolyltransferase Ag85A (fbpA) from Mycobacterium gordonae.